A 217-amino-acid polypeptide reads, in one-letter code: Ranaspumin (217 aa).

4 cysteine pairs are disulfide-bonded: Cys18–Cys67, Cys38–Cys114, Cys125–Cys168, and Cys146–Cys207.

As to quaternary structure, monomer. As to expression, exclusively expressed in females in the early oviduct, the glandular part of the oviduct (pars convoluta dilata) and in the cloaca.

It localises to the secreted. In terms of biological role, acts as a surfactant. Is the major protein constituent (45%) of foam nests. Has no antimicrobial activity, no larvicidal activity, and is not toxic to mice. The protein is Ranaspumin of Leptodactylus vastus (Northeastern pepper frog).